The primary structure comprises 187 residues: uncharacterized protein (187 aa).

Positions 1 to 25 (MSKFVKTAIAAAMVMGAFTSTATIA) are cleaved as a signal peptide.

This sequence belongs to the fimbrial protein family.

In terms of biological role, part of the yfcOPQRSUV fimbrial operon. Could contribute to adhesion to various surfaces in specific environmental niches. Increases adhesion to eukaryotic T24 bladder epithelial cells in the absence of fim genes. This is an uncharacterized protein from Escherichia coli (strain K12).